A 65-amino-acid polypeptide reads, in one-letter code: MPKMKTRQSAAKRYEVTGSGKLRRRRAGKNHLLQHKSAARKRSLSTKVEVSETDLYKVTRQCPYL.

Residues 1 to 46 (MPKMKTRQSAAKRYEVTGSGKLRRRRAGKNHLLQHKSAARKRSLST) are disordered. Positions 21 to 44 (KLRRRRAGKNHLLQHKSAARKRSL) are enriched in basic residues.

The protein belongs to the bacterial ribosomal protein bL35 family.

The polypeptide is Large ribosomal subunit protein bL35 (Gloeobacter violaceus (strain ATCC 29082 / PCC 7421)).